The chain runs to 448 residues: Tubulin alpha-5 chain (448 aa).

An MREC motif motif is present at residues 1–4 (MREC). Gln11 is a GTP binding site. At Lys40 the chain carries N6-acetyllysine. GTP contacts are provided by Glu71, Ser140, Gly144, Thr145, Thr179, Asn206, and Asn228. Glu71 serves as a coordination point for Mg(2+). The active site involves Glu254.

The protein belongs to the tubulin family. Dimer of alpha and beta chains. A typical microtubule is a hollow water-filled tube with an outer diameter of 25 nm and an inner diameter of 15 nM. Alpha-beta heterodimers associate head-to-tail to form protofilaments running lengthwise along the microtubule wall with the beta-tubulin subunit facing the microtubule plus end conferring a structural polarity. Microtubules usually have 13 protofilaments but different protofilament numbers can be found in some organisms and specialized cells. Mg(2+) is required as a cofactor. Post-translationally, some glutamate residues at the C-terminus are polyglycylated, resulting in polyglycine chains on the gamma-carboxyl group. Glycylation is mainly limited to tubulin incorporated into axonemes (cilia and flagella) whereas glutamylation is prevalent in neuronal cells, centrioles, axonemes, and the mitotic spindle. Both modifications can coexist on the same protein on adjacent residues, and lowering polyglycylation levels increases polyglutamylation, and reciprocally. The precise function of polyglycylation is still unclear. Some glutamate residues at the C-terminus are polyglutamylated, resulting in polyglutamate chains on the gamma-carboxyl group. Polyglutamylation plays a key role in microtubule severing by spastin (SPAST). SPAST preferentially recognizes and acts on microtubules decorated with short polyglutamate tails: severing activity by SPAST increases as the number of glutamates per tubulin rises from one to eight, but decreases beyond this glutamylation threshold. In terms of processing, acetylation of alpha chains at Lys-40 is located inside the microtubule lumen. This modification has been correlated with increased microtubule stability, intracellular transport and ciliary assembly.

The protein resides in the cytoplasm. It localises to the cytoskeleton. The enzyme catalyses GTP + H2O = GDP + phosphate + H(+). Functionally, tubulin is the major constituent of microtubules, a cylinder consisting of laterally associated linear protofilaments composed of alpha- and beta-tubulin heterodimers. Microtubules grow by the addition of GTP-tubulin dimers to the microtubule end, where a stabilizing cap forms. Below the cap, tubulin dimers are in GDP-bound state, owing to GTPase activity of alpha-tubulin. This Gallus gallus (Chicken) protein is Tubulin alpha-5 chain.